A 304-amino-acid polypeptide reads, in one-letter code: Phosphoribosylaminoimidazole-succinocarboxamide synthase (304 aa).

The protein belongs to the SAICAR synthetase family.

It carries out the reaction 5-amino-1-(5-phospho-D-ribosyl)imidazole-4-carboxylate + L-aspartate + ATP = (2S)-2-[5-amino-1-(5-phospho-beta-D-ribosyl)imidazole-4-carboxamido]succinate + ADP + phosphate + 2 H(+). The protein operates within purine metabolism; IMP biosynthesis via de novo pathway; 5-amino-1-(5-phospho-D-ribosyl)imidazole-4-carboxamide from 5-amino-1-(5-phospho-D-ribosyl)imidazole-4-carboxylate: step 1/2. This chain is Phosphoribosylaminoimidazole-succinocarboxamide synthase, found in Streptomyces griseus subsp. griseus (strain JCM 4626 / CBS 651.72 / NBRC 13350 / KCC S-0626 / ISP 5235).